We begin with the raw amino-acid sequence, 427 residues long: Trigger factor (427 aa).

The PPIase FKBP-type domain occupies 160 to 240; it reads TDTVIGDVEK…VKEVKRLELP (81 aa).

The protein belongs to the FKBP-type PPIase family. Tig subfamily.

Its subcellular location is the cytoplasm. The enzyme catalyses [protein]-peptidylproline (omega=180) = [protein]-peptidylproline (omega=0). Involved in protein export. Acts as a chaperone by maintaining the newly synthesized protein in an open conformation. Functions as a peptidyl-prolyl cis-trans isomerase. The protein is Trigger factor of Chlorobium phaeobacteroides (strain DSM 266 / SMG 266 / 2430).